The primary structure comprises 175 residues: Disulfide bond formation protein B 2 (175 aa).

Residues 1-9 (MYLARTRFL) lie on the Cytoplasmic side of the membrane. The helical transmembrane segment at 10–26 (FFLASLACASIIGTAFY) threads the bilayer. Residues 27 to 44 (LQQTFGLDPCFLCLIQRA) are Periplasmic-facing. Residues cysteine 36 and cysteine 39 are joined by a disulfide bond. The helical transmembrane segment at 45–61 (AIIACGVLALCAACHAP) threads the bilayer. The Cytoplasmic segment spans residues 62-68 (GPTGMRR). A helical transmembrane segment spans residues 69 to 85 (YSLGFLLIALTGLVTAG). At 86–142 (AQVWLQTASADQLIPFITKLEHLLSLLSLDMCIDRLRSDAMFCAEITWTLFGISLPE) the chain is on the periplasmic side. A helical transmembrane segment spans residues 143 to 161 (WSLLAFTGLALLPLYPLFS). Over 162–175 (EFSHWLATKDRARY) the chain is Cytoplasmic.

This sequence belongs to the DsbB family.

Its subcellular location is the cell inner membrane. In terms of biological role, required for disulfide bond formation in some periplasmic proteins. Acts by oxidizing the DsbA protein. The sequence is that of Disulfide bond formation protein B 2 from Pseudomonas savastanoi pv. phaseolicola (strain 1448A / Race 6) (Pseudomonas syringae pv. phaseolicola (strain 1448A / Race 6)).